The chain runs to 131 residues: Profilin-7 (131 aa).

Cysteine 13 and cysteine 115 form a disulfide bridge. The Involved in PIP2 interaction motif lies at 81–97 (AVIRGKKGAGGITIKKT). Threonine 111 is modified (phosphothreonine).

This sequence belongs to the profilin family. As to quaternary structure, occurs in many kinds of cells as a complex with monomeric actin in a 1:1 ratio. In terms of processing, phosphorylated by MAP kinases.

It localises to the cytoplasm. The protein resides in the cytoskeleton. Its function is as follows. Binds to actin and affects the structure of the cytoskeleton. At high concentrations, profilin prevents the polymerization of actin, whereas it enhances it at low concentrations. The chain is Profilin-7 from Olea europaea (Common olive).